A 214-amino-acid polypeptide reads, in one-letter code: Thymidylate kinase (214 aa).

10–17 (GGEGAGKS) is a binding site for ATP.

The protein belongs to the thymidylate kinase family.

The catalysed reaction is dTMP + ATP = dTDP + ADP. Its function is as follows. Phosphorylation of dTMP to form dTDP in both de novo and salvage pathways of dTTP synthesis. This Brucella canis (strain ATCC 23365 / NCTC 10854 / RM-666) protein is Thymidylate kinase.